A 59-amino-acid chain; its full sequence is MAVPKKKSSKSKGRSRAAHHAIKAPNLTSCSNCQEPMMPHRVCPKCGWYDGREVVSMEE.

Positions 1–21 (MAVPKKKSSKSKGRSRAAHHA) are disordered.

Belongs to the bacterial ribosomal protein bL32 family.

The protein is Large ribosomal subunit protein bL32 of Magnetococcus marinus (strain ATCC BAA-1437 / JCM 17883 / MC-1).